The sequence spans 207 residues: ATP-dependent Clp protease proteolytic subunit (207 aa).

The Nucleophile role is filled by serine 111. Residue histidine 136 is part of the active site.

It belongs to the peptidase S14 family. Fourteen ClpP subunits assemble into 2 heptameric rings which stack back to back to give a disk-like structure with a central cavity, resembling the structure of eukaryotic proteasomes. Component of the ClpAP and ClpXP complexes.

It is found in the cytoplasm. It catalyses the reaction Hydrolysis of proteins to small peptides in the presence of ATP and magnesium. alpha-casein is the usual test substrate. In the absence of ATP, only oligopeptides shorter than five residues are hydrolyzed (such as succinyl-Leu-Tyr-|-NHMec, and Leu-Tyr-Leu-|-Tyr-Trp, in which cleavage of the -Tyr-|-Leu- and -Tyr-|-Trp bonds also occurs).. Its function is as follows. Cleaves peptides in various proteins in a process that requires ATP hydrolysis. Has a chymotrypsin-like activity. Plays a major role in the degradation of misfolded proteins. The polypeptide is ATP-dependent Clp protease proteolytic subunit (Salmonella enteritidis PT4 (strain P125109)).